Here is a 66-residue protein sequence, read N- to C-terminus: Disintegrin EO5B (66 aa).

The Disintegrin domain occupies 1-65 (NSAHPCCDPV…DCPRNPYKGK (65 aa)). 4 disulfide bridges follow: Cys6–Cys29, Cys20–Cys26, Cys25–Cys50, and Cys38–Cys57. The Cell attachment site; atypical (VGD) motif lies at 42-44 (VGD).

It belongs to the disintegrin family. Dimeric disintegrin subfamily. As to quaternary structure, heterodimer with EO4A or EO5A; disulfide-linked. In terms of tissue distribution, expressed by the venom gland.

The protein localises to the secreted. Its function is as follows. Poor inhibitor of platelet aggregation. When it dimerizes with EO4A, it inhibits the adhesion of cells expressing the RGD-dependent integrin alpha-5/beta-1 (ITGA5/ITGB1) to immobilized fibronectin. When it dimerizes with EO5A, it inhibits the adhesion of the alpha-4/beta-1 (ITGA4/ITGB1) integrin to VCAM-1. When it dimerizes either with EO4A or EO5A, the inhibition on alpha-IIb/beta-3 (ITGA2B/ITGB3) is low. This is Disintegrin EO5B from Echis ocellatus (Ocellated saw-scaled viper).